Here is a 133-residue protein sequence, read N- to C-terminus: Ribosome-binding factor A (133 aa).

This sequence belongs to the RbfA family. In terms of assembly, monomer. Binds 30S ribosomal subunits, but not 50S ribosomal subunits or 70S ribosomes.

The protein resides in the cytoplasm. Functionally, one of several proteins that assist in the late maturation steps of the functional core of the 30S ribosomal subunit. Associates with free 30S ribosomal subunits (but not with 30S subunits that are part of 70S ribosomes or polysomes). Required for efficient processing of 16S rRNA. May interact with the 5'-terminal helix region of 16S rRNA. In Trichormus variabilis (strain ATCC 29413 / PCC 7937) (Anabaena variabilis), this protein is Ribosome-binding factor A.